The primary structure comprises 429 residues: Uterine milk protein (429 aa).

A signal peptide spans methionine 1–cysteine 25. N-linked (GlcNAc...) asparagine glycans are attached at residues asparagine 222 and asparagine 268.

It belongs to the serpin family. UTMP subfamily. In terms of processing, glycosylated; carries the so-called mannose 6-phosphate lysosomal recognition marker on its carbohydrate chains. As to expression, secreted by ovine endometrium under the influence of progesterone.

This chain is Uterine milk protein, found in Ovis aries (Sheep).